The sequence spans 91 residues: Non-specific lipid-transfer protein 1 (91 aa).

Cystine bridges form between C4–C51, C14–C28, C29–C74, and C49–C88.

Expressed in seeds (at protein level).

Functionally, plant non-specific lipid-transfer proteins transfer phospholipids as well as galactolipids across membranes. May play a role in wax or cutin deposition in the cell walls of expanding epidermal cells and certain secretory tissues. Binds to both saturated and unsaturated lipids, with the highest binding efficiency for linoleic acid, followed by linolenic acid. This Foeniculum vulgare (Fennel) protein is Non-specific lipid-transfer protein 1.